The chain runs to 29 residues: Potassium channel toxin alpha-KTx 8.3 (29 aa).

Intrachain disulfides connect Cys-3–Cys-19, Cys-6–Cys-24, and Cys-10–Cys-26.

The protein belongs to the short scorpion toxin superfamily. Potassium channel inhibitor family. Alpha-KTx 08 subfamily. As to expression, expressed by the venom gland.

It localises to the secreted. Specific and potent inhibitor of ClC-2/CLCN2 chloride channel. It slows ClC-2/CLCN2 activation by increasing the latency to first opening by nearly 8-fold but is unable to inhibit open channels, suggesting that this toxin inhibits channel activation gating. The polypeptide is Potassium channel toxin alpha-KTx 8.3 (Leiurus hebraeus (Hebrew deathstalker scorpion)).